The chain runs to 307 residues: MKQPYNHGVLFYHEHSGLKDIHNGIGEVAKSLSSMCKHLSLQLSENKGDIIKYCKSIKNENYSSDVDVLFILGGDGTLNELVNGVMQYQLNLPIGVIPGGTFNDFTKTLQLHPNFKTASEQLLTSHAESYDVLKVNDLYVLNFVGLGLIVQNAENVQDGSKDIFGKFSYIGSTVKTLLNPVKFDFSLTVDGETKEGNTSMMLIANGPNIGGGQIPLTDLSPQDGRANTFVFNDQTLNILNDILKKRDSMNWNEITQGIDHISGKHITLSTNPSMKVDIDGEINLETPIEIQVLPKAIQLLTATEQNN.

The DAGKc domain occupies 3–139 (QPYNHGVLFY…YDVLKVNDLY (137 aa)). Residues Ser44, 74–80 (GDGTLNE), and Thr101 each bind ATP. Mg(2+)-binding residues include Ser220, Asp223, and Arg225. Catalysis depends on Glu281, which acts as the Proton acceptor.

This sequence belongs to the diacylglycerol/lipid kinase family. The cofactor is Mg(2+).

May catalyze the ATP-dependent phosphorylation of lipids other than diacylglycerol (DAG). The polypeptide is Putative lipid kinase SERP0390 (Staphylococcus epidermidis (strain ATCC 35984 / DSM 28319 / BCRC 17069 / CCUG 31568 / BM 3577 / RP62A)).